A 762-amino-acid chain; its full sequence is 5-methyltetrahydropteroyltriglutamate--homocysteine methyltransferase (762 aa).

5-methyltetrahydropteroyltri-L-glutamate-binding positions include 17–20 (REWK) and Lys-111. L-homocysteine-binding positions include 435-437 (IGS) and Glu-488. Residues 435–437 (IGS) and Glu-488 each bind L-methionine. 5-methyltetrahydropteroyltri-L-glutamate-binding positions include 519–520 (RC) and Trp-565. L-homocysteine is bound at residue Asp-603. An L-methionine-binding site is contributed by Asp-603. Glu-609 contacts 5-methyltetrahydropteroyltri-L-glutamate. Positions 645, 647, and 669 each coordinate Zn(2+). The active-site Proton donor is His-698. A Zn(2+)-binding site is contributed by Cys-730.

It belongs to the vitamin-B12 independent methionine synthase family. It depends on Zn(2+) as a cofactor.

It carries out the reaction 5-methyltetrahydropteroyltri-L-glutamate + L-homocysteine = tetrahydropteroyltri-L-glutamate + L-methionine. It functions in the pathway amino-acid biosynthesis; L-methionine biosynthesis via de novo pathway; L-methionine from L-homocysteine (MetE route): step 1/1. Catalyzes the transfer of a methyl group from 5-methyltetrahydrofolate to homocysteine resulting in methionine formation. In Bacillus cereus (strain ATCC 14579 / DSM 31 / CCUG 7414 / JCM 2152 / NBRC 15305 / NCIMB 9373 / NCTC 2599 / NRRL B-3711), this protein is 5-methyltetrahydropteroyltriglutamate--homocysteine methyltransferase.